Reading from the N-terminus, the 184-residue chain is MDLSGSLLIAMPSMADPRFERSLVLICAHSPDGAMGLVINKPVEDLSFAGMLEQLNIPRAPNGRDIRVHLGGPMERGRGFVLHSPDYMSVGATMLVSGKFGMTATVDILEALARGQGPSSALMALGYSGWGPGQLEAEVQRNDWLTAEAPSELVFSDDDPGKWTGMLRHMGIDPLTLSSTAGHA.

It belongs to the UPF0301 (AlgH) family.

In Cereibacter sphaeroides (strain ATCC 17029 / ATH 2.4.9) (Rhodobacter sphaeroides), this protein is UPF0301 protein Rsph17029_2659.